Consider the following 444-residue polypeptide: Putative methylesterase 15, chloroplastic (444 aa).

The span at 1–27 (MGNSLRCISQEQDPNQKKPSSVVNGNS) shows a compositional bias: polar residues. Disordered stretches follow at residues 1-36 (MGNS…RRLS) and 48-91 (PSLS…DSLI). Residues 1 to 58 (MGNSLRCISQEQDPNQKKPSSVVNGNSSEKHVRRLSLIPSFRRRTLLPSLSCSGSSTS) constitute a chloroplast transit peptide. The segment covering 53-63 (SGSSTSSTSKK) has biased composition (low complexity). The segment covering 64–80 (GGIKTKKKIRERHHQEQ) has biased composition (basic residues). Basic and acidic residues predominate over residues 81-90 (HHHDHEKDSL). The AB hydrolase-1 domain occupies 188 to 312 (FVLVHGGGFG…QPDSNYDLME (125 aa)). Residue D262 is the Acyl-ester intermediate of the active site. Active-site charge relay system residues include D390 and H418.

The protein belongs to the AB hydrolase superfamily. Methylesterase family.

The protein localises to the plastid. It is found in the chloroplast. Its function is as follows. Putative methylesterase. This Arabidopsis thaliana (Mouse-ear cress) protein is Putative methylesterase 15, chloroplastic.